The sequence spans 907 residues: Androgen receptor (907 aa).

The tract at residues 1–545 (MEVQLGLGRV…PIDYYFPPQK (545 aa)) is modulating. Residues 1–574 (MEVQLGLGRV…GSCKVFFKRA (574 aa)) are interaction with ZNF318. Disordered regions lie at residues 36–152 (NPGP…LSLL) and 200–231 (QQQE…YLGG). The span at 55–76 (QQQQQQQQQQETSPRQQQQQQQ) shows a compositional bias: low complexity. At Ser-67 the chain carries Phosphoserine; by CDK9. Ser-81 carries the post-translational modification Phosphoserine. Polar residues predominate over residues 123–134 (TSATGKGLQQQQ). The segment covering 200 to 224 (QQQEVVSEGSSSGRAREAAGASTSS) has biased composition (low complexity). At Tyr-228 the chain carries Phosphotyrosine; by CSK. Phosphoserine is present on Ser-261. At Tyr-272 the chain carries Phosphotyrosine; by CSK and TNK2. 4 positions are modified to phosphotyrosine; by CSK: Tyr-310, Tyr-349, Tyr-360, and Tyr-365. Tyr-366 carries the post-translational modification Phosphotyrosine; by CSK and TNK2. Residue Lys-389 forms a Glycyl lysine isopeptide (Lys-Gly) (interchain with G-Cter in SUMO) linkage. Tyr-396 carries the post-translational modification Phosphotyrosine; by CSK. Lys-508 is covalently cross-linked (Glycyl lysine isopeptide (Lys-Gly) (interchain with G-Cter in SUMO)). Phosphotyrosine; by CSK is present on residues Tyr-522 and Tyr-539. An interaction with LPXN region spans residues 539–906 (YYFPPQKTCL…GKVKPIYFHT (368 aa)). The segment at residues 546-619 (TCLICGDEAS…AGMTLGARKL (74 aa)) is a DNA-binding region (nuclear receptor). 2 NR C4-type zinc fingers span residues 547–567 (CLIC…CGSC) and 583–607 (CASR…LRKC). Residues 559-649 (YGALTCGSCK…TEEPTQKLTV (91 aa)) are interaction with HIPK3. The tract at residues 579 to 906 (QKYLCASRND…GKVKPIYFHT (328 aa)) is interaction with CCAR1. The tract at residues 612–906 (MTLGARKLKK…GKVKPIYFHT (295 aa)) is interaction with KAT7. Ser-638 carries the post-translational modification Phosphoserine; by STK4/MST1. The 232-residue stretch at 656–887 (ECQPIFLNVL…DFPEMMAEII (232 aa)) folds into the NR LBD domain. 2 residues coordinate 17beta-hydroxy-5alpha-androstan-3-one: Asn-693 and Arg-740. Residues Lys-833 and Lys-835 each participate in a glycyl lysine isopeptide (Lys-Gly) (interchain with G-Cter in ubiquitin) cross-link. Thr-865 lines the 17beta-hydroxy-5alpha-androstan-3-one pocket. Tyr-903 is modified (phosphotyrosine; by CSK).

It belongs to the nuclear hormone receptor family. NR3 subfamily. Binds DNA as a homodimer. Part of a ternary complex containing AR, EFCAB6/DJBP and PARK7. Interacts with HIPK3 and NR0B2 in the presence of androgen. The ligand binding domain interacts with KAT7/HBO1 in the presence of dihydrotestosterone. Interacts with EFCAB6/DJBP, PQBP1, RANBP9, RBAK, SPDEF, SRA1, TGFB1I1 and RREB1. Interacts with ZMIZ1/ZIMP10 and ZMIZ2/ZMIP7 which both enhance its transactivation activity. Interacts with SLC30A9 and RAD54L2/ARIP4. Interacts with MACROD1 (via macro domain). Interacts via the ligand-binding domain with LXXLL and FXXLF motifs from NCOA1, NCOA2, NCOA3 and MAGEA11. Interacts (via nuclear receptor DNA binding domain and nuclear receptor ligand binding domain) with NCOA4. The AR N-terminal poly-Gln region binds Ran resulting in enhancement of AR-mediated transactivation. Ran-binding decreases as the poly-Gln length increases. Interacts with HIP1 (via coiled coil domain). Interacts (via ligand-binding domain) with TRIM68. Interacts with TNK2. Interacts with USP26. Interacts with RNF6. Interacts (regulated by RNF6 probably through polyubiquitination) with RNF14; regulates AR transcriptional activity. Interacts with PRMT2 and TRIM24. Interacts with RACK1. Interacts with RANBP10; this interaction enhances dihydrotestosterone-induced AR transcriptional activity. Interacts with PRPF6 in a hormone-independent way; this interaction enhances dihydrotestosterone-induced AR transcriptional activity. Interacts with STK4/MST1. Interacts with ZIPK/DAPK3. Interacts with LPXN. Interacts with MAK. Part of a complex containing AR, MAK and NCOA3. Interacts with CRY1. Interacts with CCAR1 and GATA2. Interacts with ZNF318. Interacts with BUD31. Interacts with ARID4A. Interacts with ARID4B. Interacts (via NR LBD domain) with ZBTB7A; the interaction is direct and androgen-dependent. Interacts with NCOR1. Interacts with NCOR2. Interacts witH CRY2 in a ligand-dependent manner. Post-translationally, phosphorylated in prostate cancer cells in response to several growth factors including EGF. Phosphorylation is induced by c-Src kinase (CSK). Tyr-522 is one of the major phosphorylation sites and an increase in phosphorylation and Src kinase activity is associated with prostate cancer progression. Phosphorylation by TNK2 enhances the DNA-binding and transcriptional activity. Phosphorylation at Ser-67 by CDK9 regulates AR promoter selectivity and cell growth. Sumoylated on Lys-389 (major) and Lys-508. Ubiquitinated. Deubiquitinated by USP26. 'Lys-6' and 'Lys-27'-linked polyubiquitination by RNF6 modulates AR transcriptional activity and specificity. In terms of processing, palmitoylated by ZDHHC7 and ZDHHC21. Palmitoylation is required for plasma membrane targeting and for rapid intracellular signaling via ERK and AKT kinases and cAMP generation.

Its subcellular location is the nucleus. It is found in the cytoplasm. Functionally, steroid hormone receptors are ligand-activated transcription factors that regulate eukaryotic gene expression and affect cellular proliferation and differentiation in target tissues. Transcription factor activity is modulated by bound coactivator and corepressor proteins like ZBTB7A that recruits NCOR1 and NCOR2 to the androgen response elements/ARE on target genes, negatively regulating androgen receptor signaling and androgen-induced cell proliferation. Transcription activation is also down-regulated by NR0B2. Activated, but not phosphorylated, by HIPK3 and ZIPK/DAPK3. The sequence is that of Androgen receptor (AR) from Canis lupus familiaris (Dog).